The chain runs to 138 residues: Small ribosomal subunit protein uS11c (138 aa).

The tract at residues 1–23 (MAKAIPRVGSRKNGRISSRKSAR) is disordered. The segment covering 9–23 (GSRKNGRISSRKSAR) has biased composition (basic residues).

The protein belongs to the universal ribosomal protein uS11 family. Part of the 30S ribosomal subunit.

Its subcellular location is the plastid. It is found in the chloroplast. This Coffea arabica (Arabian coffee) protein is Small ribosomal subunit protein uS11c.